A 187-amino-acid chain; its full sequence is Decorin-binding protein B (187 aa).

The signal sequence occupies residues 1 to 20; that stretch reads MKIGKLNSIVMVLFFDLLVA.

The protein belongs to the decorin-binding protein family.

Functionally, binds to decorin which may mediate the adherence of B.burgdorferi to collagen fibers in skin and other tissues. The protein is Decorin-binding protein B (dbpB) of Borreliella burgdorferi (strain N40) (Borrelia burgdorferi).